Reading from the N-terminus, the 297-residue chain is Homoserine kinase (297 aa).

An ATP-binding site is contributed by 82-92 (PLTRGLGSSAS).

It belongs to the GHMP kinase family. Homoserine kinase subfamily.

It localises to the cytoplasm. It catalyses the reaction L-homoserine + ATP = O-phospho-L-homoserine + ADP + H(+). The protein operates within amino-acid biosynthesis; L-threonine biosynthesis; L-threonine from L-aspartate: step 4/5. In terms of biological role, catalyzes the ATP-dependent phosphorylation of L-homoserine to L-homoserine phosphate. The sequence is that of Homoserine kinase from Bacillus cereus (strain ATCC 10987 / NRS 248).